The chain runs to 118 residues: Large ribosomal subunit protein uL22 (118 aa).

This sequence belongs to the universal ribosomal protein uL22 family. In terms of assembly, part of the 50S ribosomal subunit.

This protein binds specifically to 23S rRNA; its binding is stimulated by other ribosomal proteins, e.g. L4, L17, and L20. It is important during the early stages of 50S assembly. It makes multiple contacts with different domains of the 23S rRNA in the assembled 50S subunit and ribosome. Its function is as follows. The globular domain of the protein is located near the polypeptide exit tunnel on the outside of the subunit, while an extended beta-hairpin is found that lines the wall of the exit tunnel in the center of the 70S ribosome. In Thermomicrobium roseum (strain ATCC 27502 / DSM 5159 / P-2), this protein is Large ribosomal subunit protein uL22.